The following is a 382-amino-acid chain: 8-amino-7-oxononanoate synthase (382 aa).

Residue R26 coordinates substrate. 104 to 105 provides a ligand contact to pyridoxal 5'-phosphate; the sequence is GY. H129 contacts substrate. Pyridoxal 5'-phosphate-binding positions include S175, 200–203, and 232–235; these read DEAH and TLSK. K235 carries the post-translational modification N6-(pyridoxal phosphate)lysine. T345 is a binding site for substrate.

It belongs to the class-II pyridoxal-phosphate-dependent aminotransferase family. BioF subfamily. Homodimer. Requires pyridoxal 5'-phosphate as cofactor.

The catalysed reaction is 6-carboxyhexanoyl-[ACP] + L-alanine + H(+) = (8S)-8-amino-7-oxononanoate + holo-[ACP] + CO2. It functions in the pathway cofactor biosynthesis; biotin biosynthesis. Functionally, catalyzes the decarboxylative condensation of pimeloyl-[acyl-carrier protein] and L-alanine to produce 8-amino-7-oxononanoate (AON), [acyl-carrier protein], and carbon dioxide. The protein is 8-amino-7-oxononanoate synthase of Mycobacterium sp. (strain KMS).